The following is a 541-amino-acid chain: GMP synthase [glutamine-hydrolyzing] (541 aa).

One can recognise a Glutamine amidotransferase type-1 domain in the interval 17 to 212 (TILVLDFGSQ…AVDICQSTTD (196 aa)). The active-site Nucleophile is Cys93. Catalysis depends on residues His186 and Glu188. In terms of domain architecture, GMPS ATP-PPase spans 213-416 (WTMGKFVDQE…LGIPEDLVWR (204 aa)). 241–247 (SGGVDST) lines the ATP pocket. XMP contacts are provided by Arg315, Asp478, Lys533, and Glu539.

Homodimer. It depends on Mg(2+) as a cofactor.

The protein localises to the cytoplasm. It is found in the cytosol. It catalyses the reaction XMP + L-glutamine + ATP + H2O = GMP + L-glutamate + AMP + diphosphate + 2 H(+). Its pathway is purine metabolism; GMP biosynthesis; GMP from XMP (L-Gln route): step 1/1. Catalyzes the conversion of xanthine monophosphate (XMP) to GMP in the presence of glutamine and ATP through an adenyl-XMP intermediate. This chain is GMP synthase [glutamine-hydrolyzing] (GUA1), found in Phaeosphaeria nodorum (strain SN15 / ATCC MYA-4574 / FGSC 10173) (Glume blotch fungus).